Reading from the N-terminus, the 179-residue chain is Large ribosomal subunit protein uL5 (179 aa).

This sequence belongs to the universal ribosomal protein uL5 family. As to quaternary structure, part of the 50S ribosomal subunit; part of the 5S rRNA/L5/L18/L25 subcomplex. Contacts the 5S rRNA and the P site tRNA. Forms a bridge to the 30S subunit in the 70S ribosome.

This is one of the proteins that bind and probably mediate the attachment of the 5S RNA into the large ribosomal subunit, where it forms part of the central protuberance. In the 70S ribosome it contacts protein S13 of the 30S subunit (bridge B1b), connecting the 2 subunits; this bridge is implicated in subunit movement. Contacts the P site tRNA; the 5S rRNA and some of its associated proteins might help stabilize positioning of ribosome-bound tRNAs. The chain is Large ribosomal subunit protein uL5 from Prochlorococcus marinus (strain MIT 9301).